The chain runs to 225 residues: Endonuclease V (225 aa).

Residues D43 and D110 each coordinate Mg(2+).

Belongs to the endonuclease V family. Mg(2+) is required as a cofactor.

The protein resides in the cytoplasm. The enzyme catalyses Endonucleolytic cleavage at apurinic or apyrimidinic sites to products with a 5'-phosphate.. In terms of biological role, DNA repair enzyme involved in the repair of deaminated bases. Selectively cleaves double-stranded DNA at the second phosphodiester bond 3' to a deoxyinosine leaving behind the intact lesion on the nicked DNA. This chain is Endonuclease V, found in Thermotoga petrophila (strain ATCC BAA-488 / DSM 13995 / JCM 10881 / RKU-1).